The primary structure comprises 194 residues: MRVFIIIIYFRCFSKDHKPYFVITMYESLKNYFFEEIKNDKLLKLPDDFYDDIREYIKNIKDDIELERVKYYFKELRKLRIYKALYLDNERENLLPEELNIIHAIENIVVELKIEETPEFKKPTEIDTPKPIYTINDIDVVKVDKNFPPFTDGTFIYDLNKNDVLSLDRKISHILEKHRIISRIGESYENPEES.

This is an uncharacterized protein from Methanocaldococcus jannaschii (strain ATCC 43067 / DSM 2661 / JAL-1 / JCM 10045 / NBRC 100440) (Methanococcus jannaschii).